A 685-amino-acid chain; its full sequence is UvrABC system protein B (685 aa).

The region spanning 39 to 420 is the Helicase ATP-binding domain; sequence EGIGDGLMYQ…TYEAEHQGQV (382 aa). Residue 52 to 59 coordinates ATP; it reads GVTGSGKT. The Beta-hairpin signature appears at 105-128; the sequence is YYDYYQPEAYVPSRDLFIEKDSSI. In terms of domain architecture, Helicase C-terminal spans 443–596; the sequence is QVDDLLSEAK…QIAFNQANGI (154 aa). Residues 640 to 675 form the UVR domain; sequence AKSIRKLEKEMQEHARNLEFEKAAAARDELFRLRQR.

It belongs to the UvrB family. In terms of assembly, forms a heterotetramer with UvrA during the search for lesions. Interacts with UvrC in an incision complex.

It is found in the cytoplasm. In terms of biological role, the UvrABC repair system catalyzes the recognition and processing of DNA lesions. A damage recognition complex composed of 2 UvrA and 2 UvrB subunits scans DNA for abnormalities. Upon binding of the UvrA(2)B(2) complex to a putative damaged site, the DNA wraps around one UvrB monomer. DNA wrap is dependent on ATP binding by UvrB and probably causes local melting of the DNA helix, facilitating insertion of UvrB beta-hairpin between the DNA strands. Then UvrB probes one DNA strand for the presence of a lesion. If a lesion is found the UvrA subunits dissociate and the UvrB-DNA preincision complex is formed. This complex is subsequently bound by UvrC and the second UvrB is released. If no lesion is found, the DNA wraps around the other UvrB subunit that will check the other stand for damage. The chain is UvrABC system protein B from Aromatoleum aromaticum (strain DSM 19018 / LMG 30748 / EbN1) (Azoarcus sp. (strain EbN1)).